We begin with the raw amino-acid sequence, 196 residues long: Holliday junction branch migration complex subunit RuvA (196 aa).

The domain I stretch occupies residues 1–63 (MYDYIKGKLS…DDAHLLFGFH (63 aa)). The interval 64–142 (TENEKEIFLN…EASGESATSR (79 aa)) is domain II. The flexible linker stretch occupies residues 143 to 148 (KVSSEQ). The interval 148–196 (QNSNLEEAMEALLALGYKATELKKVKAFFEGTNETVEQYIKSSLKMLMK) is domain III.

It belongs to the RuvA family. In terms of assembly, homotetramer. Forms an RuvA(8)-RuvB(12)-Holliday junction (HJ) complex. HJ DNA is sandwiched between 2 RuvA tetramers; dsDNA enters through RuvA and exits via RuvB. An RuvB hexamer assembles on each DNA strand where it exits the tetramer. Each RuvB hexamer is contacted by two RuvA subunits (via domain III) on 2 adjacent RuvB subunits; this complex drives branch migration. In the full resolvosome a probable DNA-RuvA(4)-RuvB(12)-RuvC(2) complex forms which resolves the HJ.

It is found in the cytoplasm. The RuvA-RuvB-RuvC complex processes Holliday junction (HJ) DNA during genetic recombination and DNA repair, while the RuvA-RuvB complex plays an important role in the rescue of blocked DNA replication forks via replication fork reversal (RFR). RuvA specifically binds to HJ cruciform DNA, conferring on it an open structure. The RuvB hexamer acts as an ATP-dependent pump, pulling dsDNA into and through the RuvAB complex. HJ branch migration allows RuvC to scan DNA until it finds its consensus sequence, where it cleaves and resolves the cruciform DNA. This is Holliday junction branch migration complex subunit RuvA from Streptococcus agalactiae serotype Ia (strain ATCC 27591 / A909 / CDC SS700).